A 187-amino-acid chain; its full sequence is UPF0301 protein PBPRA3139 (187 aa).

This sequence belongs to the UPF0301 (AlgH) family.

In Photobacterium profundum (strain SS9), this protein is UPF0301 protein PBPRA3139.